A 156-amino-acid chain; its full sequence is MPRKGPVAKRDVLPDPMYNSKLVTRLINKMMVDGKKGKSQTILYNAFDIVNERTGKEPMEVFEQALKNIMPVLEVRARRVGGANYQVPVEVRPERRTTLGLRWLVNYARLRGEKTMEERLANEILDAANNAGASVKKREDTHKMAEANKAFAHYRW.

Belongs to the universal ribosomal protein uS7 family. In terms of assembly, part of the 30S ribosomal subunit. Contacts proteins S9 and S11.

One of the primary rRNA binding proteins, it binds directly to 16S rRNA where it nucleates assembly of the head domain of the 30S subunit. Is located at the subunit interface close to the decoding center, probably blocks exit of the E-site tRNA. This chain is Small ribosomal subunit protein uS7, found in Bacillus cereus (strain B4264).